The chain runs to 139 residues: Heat shock protein homolog C338.06c (139 aa).

The sHSP domain maps to 27-139; it reads AWLSCWGPAL…EFTTRIVEIQ (113 aa).

Belongs to the small heat shock protein (HSP20) family.

It localises to the mitochondrion. This chain is Heat shock protein homolog C338.06c, found in Schizosaccharomyces pombe (strain 972 / ATCC 24843) (Fission yeast).